The sequence spans 306 residues: N-acetylmuramic acid 6-phosphate etherase (306 aa).

Residues 62 to 225 enclose the SIS domain; it reads IAQAFQNGGR…TTASMIRIGK (164 aa). Residue E90 is the Proton donor of the active site. E121 is a catalytic residue.

It belongs to the GCKR-like family. MurNAc-6-P etherase subfamily. Homodimer.

The catalysed reaction is N-acetyl-D-muramate 6-phosphate + H2O = N-acetyl-D-glucosamine 6-phosphate + (R)-lactate. It functions in the pathway amino-sugar metabolism; 1,6-anhydro-N-acetylmuramate degradation. It participates in amino-sugar metabolism; N-acetylmuramate degradation. The protein operates within cell wall biogenesis; peptidoglycan recycling. Its function is as follows. Specifically catalyzes the cleavage of the D-lactyl ether substituent of MurNAc 6-phosphate, producing GlcNAc 6-phosphate and D-lactate. Together with AnmK, is also required for the utilization of anhydro-N-acetylmuramic acid (anhMurNAc) either imported from the medium or derived from its own cell wall murein, and thus plays a role in cell wall recycling. The protein is N-acetylmuramic acid 6-phosphate etherase of Vibrio atlanticus (strain LGP32) (Vibrio splendidus (strain Mel32)).